A 270-amino-acid polypeptide reads, in one-letter code: Phosphate import ATP-binding protein PstB 1 (270 aa).

The ABC transporter domain maps to 24–265 (LAVERLNLFY…PYQRQTEDYI (242 aa)). An ATP-binding site is contributed by 56-63 (GPSGCGKS).

Belongs to the ABC transporter superfamily. Phosphate importer (TC 3.A.1.7) family. As to quaternary structure, the complex is composed of two ATP-binding proteins (PstB), two transmembrane proteins (PstC and PstA) and a solute-binding protein (PstS).

Its subcellular location is the cell inner membrane. It catalyses the reaction phosphate(out) + ATP + H2O = ADP + 2 phosphate(in) + H(+). In terms of biological role, part of the ABC transporter complex PstSACB involved in phosphate import. Responsible for energy coupling to the transport system. In Yersinia pestis bv. Antiqua (strain Antiqua), this protein is Phosphate import ATP-binding protein PstB 1.